The primary structure comprises 246 residues: Probable transcriptional regulatory protein Rmag_0394 (246 aa).

The protein belongs to the TACO1 family.

It localises to the cytoplasm. The protein is Probable transcriptional regulatory protein Rmag_0394 of Ruthia magnifica subsp. Calyptogena magnifica.